We begin with the raw amino-acid sequence, 367 residues long: Apolipoprotein A-V (367 aa).

Residues 1 to 20 (MVAVLTWALALLSAFATAQT) form the signal peptide. Phosphoserine is present on Ser-56.

This sequence belongs to the apolipoprotein A1/A4/E family. As to quaternary structure, interacts with GPIHBP1. Interacts with SORL1; this interaction leads to APOA5 internalization and sorting either to lysosomes and degradation, or to the trans-Golgi network. Post-translationally, phosphorylated by FAM20C in the extracellular medium.

It is found in the secreted. It localises to the early endosome. Its subcellular location is the late endosome. The protein resides in the golgi apparatus. The protein localises to the trans-Golgi network. In terms of biological role, minor apolipoprotein mainly associated with HDL and to a lesser extent with VLDL. May also be associated with chylomicrons. Important determinant of plasma triglyceride (TG) levels by both being a potent stimulator of apo-CII lipoprotein lipase (LPL) TG hydrolysis and an inhibitor of the hepatic VLDL-TG production rate (without affecting the VLDL-apoB production rate). Activates poorly lecithin:cholesterol acyltransferase (LCAT) and does not enhance efflux of cholesterol from macrophages. Binds heparin. The polypeptide is Apolipoprotein A-V (APOA5) (Phoca vitulina (Harbor seal)).